We begin with the raw amino-acid sequence, 91 residues long: MEIKLINIGFGNIVSANRIIAIVSPESAPIKRIITEARDRGMLIDATYGRRTRAVIITDSDHVILSAVQPETVAHRLVSKEAPAQAEESAD.

The protein belongs to the RemA family.

This is Putative regulatory protein PTH_1796 from Pelotomaculum thermopropionicum (strain DSM 13744 / JCM 10971 / SI).